A 473-amino-acid polypeptide reads, in one-letter code: Glutamine synthetase (473 aa).

Residues 15 to 100 (ENIKIIDLKF…ICSIKEPRTG (86 aa)) enclose the GS beta-grasp domain. Positions 107–473 (PRTIAAKAVE…PYEFSLYYDC (367 aa)) constitute a GS catalytic domain. Glu132 lines the Mn(2+) pocket. Glu134 is a binding site for Mg(2+). Glu210 lines the ATP pocket. The Mg(2+) site is built by Glu215 and Glu223. L-glutamate is bound by residues 267–268 (NG) and Gly268. His272 is a Mg(2+) binding site. Residues 274–276 (HQS) and Ser276 each bind ATP. Positions 324, 330, and 342 each coordinate L-glutamate. The ATP site is built by Arg342, Arg347, and Lys356. Glu361 lines the Mn(2+) pocket. Arg363 contacts L-glutamate. The residue at position 401 (Tyr401) is an O-AMP-tyrosine.

This sequence belongs to the glutamine synthetase family. As to quaternary structure, oligomer of 12 subunits arranged in the form of two hexagons. It depends on Mg(2+) as a cofactor.

It localises to the cytoplasm. It catalyses the reaction L-glutamate + NH4(+) + ATP = L-glutamine + ADP + phosphate + H(+). Its activity is regulated as follows. Inhibited by ADP (90%), AMP (80%), alanine (52%) and aspartate (41%). The activity of this enzyme could be controlled by adenylation under conditions of abundant glutamine. Involved in nitrogen metabolism via ammonium assimilation. Catalyzes the ATP-dependent biosynthesis of glutamine from glutamate and ammonia. The sequence is that of Glutamine synthetase from Synechocystis sp. (strain ATCC 27184 / PCC 6803 / Kazusa).